A 142-amino-acid chain; its full sequence is Organic hydroperoxide resistance protein-like 2 (142 aa).

It belongs to the OsmC/Ohr family.

The chain is Organic hydroperoxide resistance protein-like 2 from Staphylococcus epidermidis (strain ATCC 35984 / DSM 28319 / BCRC 17069 / CCUG 31568 / BM 3577 / RP62A).